The following is a 209-amino-acid chain: MKTPLAPTKSNLAYVRDQLGLARDGYRLLEQKREILFMELTSLLEEVHLLETELDKRRKQAYASLWQLLLAQGRDDIAACALVTPVPCRVQQEVLLIAGLRFLRLDAVMQPPKLQYAALGSSACMDRAREDFGLLLQTLTRMASVQTIVWRLASEMRKTQRRVNALSKQIIPQMCETCMYIESVLEERDRESTFVLKSLKARKDPTTTL.

Belongs to the V-ATPase D subunit family.

Its function is as follows. Produces ATP from ADP in the presence of a proton gradient across the membrane. This Treponema pallidum (strain Nichols) protein is V-type ATP synthase subunit D 2 (atpD2).